A 679-amino-acid polypeptide reads, in one-letter code: UvrABC system protein B (679 aa).

In terms of domain architecture, Helicase ATP-binding spans 25–176 (EGVNGGERYQ…NLRGSLRDLV (152 aa)). 38-45 (GATGTGKT) contacts ATP. Residues 91–114 (YYDYYQPEAYVPVSDTYIAKTASI) carry the Beta-hairpin motif. A Helicase C-terminal domain is found at 429–591 (QVDDLLGEIR…ITPTAAGKKA (163 aa)). In terms of domain architecture, UVR spans 638-673 (PELIDQLELKMKESAKKLDFEEAANLRDRIKKLRQK).

The protein belongs to the UvrB family. In terms of assembly, forms a heterotetramer with UvrA during the search for lesions. Interacts with UvrC in an incision complex.

Its subcellular location is the cytoplasm. Its function is as follows. The UvrABC repair system catalyzes the recognition and processing of DNA lesions. A damage recognition complex composed of 2 UvrA and 2 UvrB subunits scans DNA for abnormalities. Upon binding of the UvrA(2)B(2) complex to a putative damaged site, the DNA wraps around one UvrB monomer. DNA wrap is dependent on ATP binding by UvrB and probably causes local melting of the DNA helix, facilitating insertion of UvrB beta-hairpin between the DNA strands. Then UvrB probes one DNA strand for the presence of a lesion. If a lesion is found the UvrA subunits dissociate and the UvrB-DNA preincision complex is formed. This complex is subsequently bound by UvrC and the second UvrB is released. If no lesion is found, the DNA wraps around the other UvrB subunit that will check the other stand for damage. This is UvrABC system protein B from Synechococcus sp. (strain CC9311).